Here is a 138-residue protein sequence, read N- to C-terminus: Mu-like prophage FluMu G protein 2 (138 aa).

To phage Mu protein G.

This is Mu-like prophage FluMu G protein 2 from Haemophilus influenzae (strain ATCC 51907 / DSM 11121 / KW20 / Rd).